The primary structure comprises 634 residues: DNA-directed RNA polymerase subunit gamma (634 aa).

4 residues coordinate Zn(2+): C74, C76, C89, and C92. D471, D473, and D475 together coordinate Mg(2+).

The protein belongs to the RNA polymerase beta' chain family. RpoC1 subfamily. In cyanobacteria the RNAP catalytic core is composed of 2 alpha, 1 beta, 1 beta', 1 gamma and 1 omega subunit. When a sigma factor is associated with the core the holoenzyme is formed, which can initiate transcription. It depends on Mg(2+) as a cofactor. Requires Zn(2+) as cofactor.

It carries out the reaction RNA(n) + a ribonucleoside 5'-triphosphate = RNA(n+1) + diphosphate. Functionally, DNA-dependent RNA polymerase catalyzes the transcription of DNA into RNA using the four ribonucleoside triphosphates as substrates. The polypeptide is DNA-directed RNA polymerase subunit gamma (Synechococcus sp. (strain RCC307)).